The primary structure comprises 384 residues: H-2 class I histocompatibility antigen, TLA(B) alpha chain (384 aa).

The N-terminal stretch at 1–26 (MRMGTPVPGTLLILLAASQGQTQTCP) is a signal peptide. The tract at residues 27 to 116 (GSHSLRYFYT…MLDYYNLSQN (90 aa)) is alpha-1. The Extracellular portion of the chain corresponds to 27-314 (GSHSLRYFYT…TSMPNRTTVR (288 aa)). N-linked (GlcNAc...) asparagine glycans are attached at residues N63, N112, and N116. An alpha-2 region spans residues 117–208 (GSHTIQVMYG…ENRKKTQECT (92 aa)). 2 cysteine pairs are disulfide-bonded: C127/C190 and C229/C285. The interval 209–300 (DPPKTHVTHH…GLPEPLTLRW (92 aa)) is alpha-3. An Ig-like C1-type domain is found at 211-299 (PKTHVTHHPR…EGLPEPLTLR (89 aa)). The interval 301 to 314 (EPPQTSMPNRTTVR) is connecting peptide. N-linked (GlcNAc...) asparagine glycosylation is present at N309. The chain crosses the membrane as a helical span at residues 315 to 334 (ALLGAMIILGFMSGSVMMWM). Residues 335 to 384 (RKNNGGNGDDNTAAYQNEREHLSLDPRAESEALGVEAGMKDLPSAPPLVS) are Cytoplasmic-facing. Residues 354–364 (EHLSLDPRAES) show a composition bias toward basic and acidic residues. Positions 354-384 (EHLSLDPRAESEALGVEAGMKDLPSAPPLVS) are disordered.

Belongs to the MHC class I family. Heterodimer of an alpha chain and a beta chain (beta-2-microglobulin). In terms of tissue distribution, TL antigens are only expressed on thymocytes, activated T-lymphocytes and on some thymic leukemias.

Its subcellular location is the membrane. Its function is as follows. Involved in the presentation of foreign antigens to the immune system. The chain is H-2 class I histocompatibility antigen, TLA(B) alpha chain (H2-T3) from Mus musculus (Mouse).